The chain runs to 198 residues: Calcium channel flower (198 aa).

A run of 3 helical transmembrane segments spans residues 36–56, 67–89, and 114–134; these read LGIV…LSII, IIQM…VCIE, and AVPP…GLIF.

This sequence belongs to the calcium channel flower family. As to quaternary structure, homomultimer. Associates with the dally/ magu complex.

Its subcellular location is the cell membrane. The protein localises to the cytoplasmic vesicle. It localises to the secretory vesicle. The protein resides in the synaptic vesicle membrane. It is found in the presynaptic cell membrane. Its subcellular location is the endosome. Its activity is regulated as follows. Channel activity is inhibited by La(3+), which reduces Ca(2+) influx and thus inhibits it's function in promoting activity-dependent bulk endocytosis (ADBE) in response to high stimuli. Its function is as follows. Transmembrane protein which mediates synaptic endocytosis, fitness-based cell culling, neuronal culling, morphogen gradient scaling, and calcium transport. Regulates synaptic endocytosis and hence couples exo- with endocytosis. Controls two major modes of synaptic vesicle (SV) endocytosis in the synaptic boutons of neuromuscular junctions (NMJs); Ca(2+) channel-independent Clathrin-mediated endocytosis (CME) in response to mild stimulation, and Ca(2+) channel-dependent activity-dependent bulk endocytosis (ADBE) in response to strong stimulation. Functions in ADBE and subsequent SV reformation from bulk endosomes by initiating Ca(2+) channel-dependent phosphatidylinositol 4,5-bisphosphate (PtdIns(4,5)P2) compartmentalization in synaptic boutons. There it acts at the periactive zone to provide the low Ca(2+) levels required to initiate Calcineurin activation and upregulate PtdIns(4,5)P2. Conversely PtdIns(4,5)P2 enhances fwe Ca(2+) channel-activity, establishing a positive feedback loop that induces PtdIns(4,5)P2 microdomain at the periactive zone. These microdomains trigger bulk membrane invagination (i.e. ADBE) by triggering actin polymerization while also promoting localization of fwe to bulk endosomes, thereby removing the ADBE trigger to reduce endocytosis and prevent excess membrane uptake. PtdIns(4,5)P2 then promotes SV reformation from the bulk endosomes, to coordinate ADBE and subsequent SV reformation. Different combinations of the flower isoforms at the cell membrane are also required for the identification and elimination of suboptimal or supernumerary cells during development, regeneration, and adulthood. Required for the recognition and elimination of unfit cells in the developing wing during cell competition. In the developing pupal retina, mediates the elimination of unwanted postmitotic neurons, including supernumerary photoreceptor neurons that form at the periphery of the retina and are contained within incomplete ommatidia units. Also required for efficient elimination and replacement of old neurons by newly generated neurons during regeneration in the adult brain following mechanical injury. Downstream of the flower fitness fingerprints, cells identified as unwanted or unfit are eliminated via apoptosis through the expression of ahuizotl (azot). However, the cells marked for elimination by the flower isoforms only undergo apoptosis if additional thresholds are met; (1) their neighboring fit/healthy cells express different levels of the fwe isoforms, and (2) the levels of the protective signal SPARC expressed by the loser or unwanted cells are unable to inhibit caspase activation. These additional thresholds for flower-mediated apoptosis, allows useful cells to recover from transient and limited stress before they are unnecessarily eliminated. Functions with dally and magu in a mechanism of scaling, which utilises apoptosis to ensure that the dpp morphogen gradient, which mediates organ growth, remains proportional to the size of the growing wing. In this mechanism, fwe represses dally- and Magu-dependent activity in expanding the gradient, and dally/Magu inhibits fwe-dependent apoptosis to keep cell death rate low. When the levels of these different proteins are optimally regulated the gradient correctly scales with organ growth but when this fails, fwe-mediated apoptosis is activated to trim the developing tissue to match the correct size of the gradient. This is Calcium channel flower from Drosophila persimilis (Fruit fly).